Reading from the N-terminus, the 176-residue chain is MLVNSLIVILSVIAMEGIAAFTHRYIMHGWGWRWHESHHTPRKGVFELNDLFAVVFAGVAIALIAVGTAGVWPLQWIGCGMTVYGLLYFLVHDGLVHQRWPFHWIPRRGYLKRLYVAHRLHHAVRGREGCVSFGFIYARKPADLQAILRERHGRPPKRDAAKDRPDAASPSSSSPE.

Positions 10 to 126 (LSVIAMEGIA…AHRLHHAVRG (117 aa)) constitute a Fatty acid hydroxylase domain. Residues 152-176 (HGRPPKRDAAKDRPDAASPSSSSPE) are disordered. The span at 156–166 (PKRDAAKDRPD) shows a compositional bias: basic and acidic residues. A compositionally biased stretch (low complexity) spans 167–176 (AASPSSSSPE).

It belongs to the sterol desaturase family.

The protein operates within carotenoid biosynthesis; zeaxanthin biosynthesis. In terms of biological role, catalyzes the hydroxylation reaction from beta-carotene to zeaxanthin. This chain is Beta-carotene hydroxylase (crtZ), found in Pseudescherichia vulneris (Escherichia vulneris).